Here is a 1339-residue protein sequence, read N- to C-terminus: Transcription factor tau subunit sfc3 (1339 aa).

The interval 470–515 is disordered; it reads MESNAEVSPDGMTLLPRKRGRPRKSANISVTSSPIRPSKNENNLPS. A DNA-binding region (a.T hook) is located at residues 485–497; that stretch reads PRKRGRPRKSANI. Residues 495–514 are compositionally biased toward polar residues; it reads ANISVTSSPIRPSKNENNLP. S595 and S596 each carry phosphoserine. The tract at residues 791 to 826 is disordered; sequence RRKSMPAEIKRHKESSETKPVDKEEVKKNEKEKDDP. Residues 798 to 826 show a composition bias toward basic and acidic residues; that stretch reads EIKRHKESSETKPVDKEEVKKNEKEKDDP.

In terms of assembly, component of the TFIIIC complex including sfc1, sfc3, sfc4, sfc6 and sfc7. The subunits are organized in two globular domains, tauA and tauB, connected by a proteolysis-sensitive and flexible linker. Interacts with sfc1, sfc4 and sfc6.

Its subcellular location is the nucleus envelope. In terms of biological role, TFIIIC mediates tRNA and 5S RNA gene activation by binding to intragenic promoter elements. Upstream of the transcription start site, TFIIIC assembles the initiation complex TFIIIB-TFIIIC-tDNA, which is sufficient for RNA polymerase III recruitment and function. Part of the tauB domain of TFIIIC that binds boxB DNA promoter sites of tRNA and similar genes. Cooperates with sfc6 in DNA binding. Localizes to chromatin insulator sequence without recruiting RNA polymerase III and plays a role in nuclear organization. The chain is Transcription factor tau subunit sfc3 from Schizosaccharomyces pombe (strain 972 / ATCC 24843) (Fission yeast).